The sequence spans 184 residues: ATP synthase subunit b (184 aa).

A helical membrane pass occupies residues Leu4–Ser24.

The protein belongs to the ATPase B chain family. In terms of assembly, F-type ATPases have 2 components, F(1) - the catalytic core - and F(0) - the membrane proton channel. F(1) has five subunits: alpha(3), beta(3), gamma(1), delta(1), epsilon(1). F(0) has three main subunits: a(1), b(2) and c(10-14). The alpha and beta chains form an alternating ring which encloses part of the gamma chain. F(1) is attached to F(0) by a central stalk formed by the gamma and epsilon chains, while a peripheral stalk is formed by the delta and b chains.

The protein resides in the cell inner membrane. Its function is as follows. F(1)F(0) ATP synthase produces ATP from ADP in the presence of a proton or sodium gradient. F-type ATPases consist of two structural domains, F(1) containing the extramembraneous catalytic core and F(0) containing the membrane proton channel, linked together by a central stalk and a peripheral stalk. During catalysis, ATP synthesis in the catalytic domain of F(1) is coupled via a rotary mechanism of the central stalk subunits to proton translocation. Functionally, component of the F(0) channel, it forms part of the peripheral stalk, linking F(1) to F(0). In Paracoccus denitrificans (strain Pd 1222), this protein is ATP synthase subunit b.